The primary structure comprises 518 residues: Stage V sporulation protein B (518 aa).

14 consecutive transmembrane segments (helical) span residues Phe6–Val26, Met45–Ile65, Ile91–Ala111, Thr120–Leu140, Ile165–Ala185, Gly186–Phe206, Trp250–Ala270, Phe281–Val301, Leu326–Met346, Val348–Leu368, Ala387–Ala407, Ser411–Leu431, Ile446–Ile466, and Val478–Phe498.

The protein belongs to the polysaccharide synthase family.

Its subcellular location is the cell membrane. Involved, directly or indirectly, in spore cortex biosynthesis. Affects only indirectly the expression of late sporulation genes. The sequence is that of Stage V sporulation protein B (spoVB) from Bacillus subtilis (strain 168).